The following is a 165-amino-acid chain: 3-isopropylmalate dehydratase small subunit (165 aa).

Belongs to the LeuD family. LeuD type 2 subfamily. Heterodimer of LeuC and LeuD.

It carries out the reaction (2R,3S)-3-isopropylmalate = (2S)-2-isopropylmalate. Its pathway is amino-acid biosynthesis; L-leucine biosynthesis; L-leucine from 3-methyl-2-oxobutanoate: step 2/4. Catalyzes the isomerization between 2-isopropylmalate and 3-isopropylmalate, via the formation of 2-isopropylmaleate. This chain is 3-isopropylmalate dehydratase small subunit, found in Halothermothrix orenii (strain H 168 / OCM 544 / DSM 9562).